The following is a 191-amino-acid chain: Large ribosomal subunit protein uL5 (191 aa).

It belongs to the universal ribosomal protein uL5 family. Part of the 50S ribosomal subunit; part of the 5S rRNA/L5/L18/L25 subcomplex. Contacts the 5S rRNA and the P site tRNA. Forms a bridge to the 30S subunit in the 70S ribosome.

Functionally, this is one of the proteins that bind and probably mediate the attachment of the 5S RNA into the large ribosomal subunit, where it forms part of the central protuberance. In the 70S ribosome it contacts protein S13 of the 30S subunit (bridge B1b), connecting the 2 subunits; this bridge is implicated in subunit movement. Contacts the P site tRNA; the 5S rRNA and some of its associated proteins might help stabilize positioning of ribosome-bound tRNAs. In Micrococcus luteus (strain ATCC 4698 / DSM 20030 / JCM 1464 / CCM 169 / CCUG 5858 / IAM 1056 / NBRC 3333 / NCIMB 9278 / NCTC 2665 / VKM Ac-2230) (Micrococcus lysodeikticus), this protein is Large ribosomal subunit protein uL5.